The following is a 292-amino-acid chain: ATP synthase gamma chain (292 aa).

The protein belongs to the ATPase gamma chain family. As to quaternary structure, F-type ATPases have 2 components, CF(1) - the catalytic core - and CF(0) - the membrane proton channel. CF(1) has five subunits: alpha(3), beta(3), gamma(1), delta(1), epsilon(1). CF(0) has three main subunits: a, b and c.

The protein resides in the cell inner membrane. Its function is as follows. Produces ATP from ADP in the presence of a proton gradient across the membrane. The gamma chain is believed to be important in regulating ATPase activity and the flow of protons through the CF(0) complex. The protein is ATP synthase gamma chain of Syntrophobacter fumaroxidans (strain DSM 10017 / MPOB).